The following is a 337-amino-acid chain: Ribosomal RNA small subunit methyltransferase H (337 aa).

S-adenosyl-L-methionine-binding positions include 36–38 (GGH), aspartate 56, phenylalanine 82, aspartate 100, and glutamine 107. Residues 317–337 (RRSGRIPNPQSPIPASQGDAR) form a disordered region.

It belongs to the methyltransferase superfamily. RsmH family.

It is found in the cytoplasm. It carries out the reaction cytidine(1402) in 16S rRNA + S-adenosyl-L-methionine = N(4)-methylcytidine(1402) in 16S rRNA + S-adenosyl-L-homocysteine + H(+). Specifically methylates the N4 position of cytidine in position 1402 (C1402) of 16S rRNA. The sequence is that of Ribosomal RNA small subunit methyltransferase H from Xanthomonas oryzae pv. oryzae (strain KACC10331 / KXO85).